The chain runs to 409 residues: Proteasome-activating nucleotidase (409 aa).

The disordered stretch occupies residues M1–D22. A coiled-coil region spans residues V23–S58. Residues G183–L188 and H322 contribute to the ATP site.

The protein belongs to the AAA ATPase family. As to quaternary structure, homohexamer. The hexameric complex has a two-ring architecture resembling a top hat that caps the 20S proteasome core at one or both ends. Upon ATP-binding, the C-terminus of PAN interacts with the alpha-rings of the proteasome core by binding to the intersubunit pockets.

Its subcellular location is the cytoplasm. Functionally, ATPase which is responsible for recognizing, binding, unfolding and translocation of substrate proteins into the archaeal 20S proteasome core particle. Is essential for opening the gate of the 20S proteasome via an interaction with its C-terminus, thereby allowing substrate entry and access to the site of proteolysis. Thus, the C-termini of the proteasomal ATPase function like a 'key in a lock' to induce gate opening and therefore regulate proteolysis. Unfolding activity requires energy from ATP hydrolysis, whereas ATP binding alone promotes ATPase-20S proteasome association which triggers gate opening, and supports translocation of unfolded substrates. The polypeptide is Proteasome-activating nucleotidase (Aeropyrum pernix (strain ATCC 700893 / DSM 11879 / JCM 9820 / NBRC 100138 / K1)).